We begin with the raw amino-acid sequence, 208 residues long: NAD(P)H-hydrate epimerase (208 aa).

A YjeF N-terminal domain is found at 11 to 208 (MRAKDQFTIN…VIVADDMGTY (198 aa)). 59 to 63 (NNGGD) contacts (6S)-NADPHX. K(+) contacts are provided by asparagine 60 and aspartate 122. (6S)-NADPHX-binding positions include 126-132 (GIGIDRP), tyrosine 137, and aspartate 155. Serine 158 contributes to the K(+) binding site.

It belongs to the NnrE/AIBP family. Requires K(+) as cofactor.

The enzyme catalyses (6R)-NADHX = (6S)-NADHX. It catalyses the reaction (6R)-NADPHX = (6S)-NADPHX. In terms of biological role, catalyzes the epimerization of the S- and R-forms of NAD(P)HX, a damaged form of NAD(P)H that is a result of enzymatic or heat-dependent hydration. This is a prerequisite for the S-specific NAD(P)H-hydrate dehydratase to allow the repair of both epimers of NAD(P)HX. The chain is NAD(P)H-hydrate epimerase from Limosilactobacillus fermentum (strain NBRC 3956 / LMG 18251) (Lactobacillus fermentum).